Here is a 185-residue protein sequence, read N- to C-terminus: MAEVKYEPRLKKEYVARIRAALQEKFSYANEMQIPKLDKIVINMGVGEATADSKKPTVAAADLAAIAGQKPVITHARNSIAGFKVRENMPIGAKVTLRGARMYEFLDRLVNIALPRVRDFRGLNPKSFDGRGNFAMGIKEHIVFPEINYDKVDQMWGMDIIVCTTATTDDEARALLKEFNFPFRQ.

The protein belongs to the universal ribosomal protein uL5 family. As to quaternary structure, part of the 50S ribosomal subunit; part of the 5S rRNA/L5/L18/L25 subcomplex. Contacts the 5S rRNA and the P site tRNA. Forms a bridge to the 30S subunit in the 70S ribosome.

This is one of the proteins that bind and probably mediate the attachment of the 5S RNA into the large ribosomal subunit, where it forms part of the central protuberance. In the 70S ribosome it contacts protein S13 of the 30S subunit (bridge B1b), connecting the 2 subunits; this bridge is implicated in subunit movement. Contacts the P site tRNA; the 5S rRNA and some of its associated proteins might help stabilize positioning of ribosome-bound tRNAs. In Rhizobium rhizogenes (strain K84 / ATCC BAA-868) (Agrobacterium radiobacter), this protein is Large ribosomal subunit protein uL5.